The chain runs to 967 residues: Phosphoenolpyruvate carboxylase (967 aa).

Serine 11 carries the phosphoserine modification. Residues histidine 172 and lysine 601 contribute to the active site.

Belongs to the PEPCase type 1 family. Homotetramer. Mg(2+) is required as a cofactor.

Its subcellular location is the cytoplasm. It catalyses the reaction oxaloacetate + phosphate = phosphoenolpyruvate + hydrogencarbonate. It participates in photosynthesis; C3 acid pathway. With respect to regulation, by light-reversible phosphorylation. Through the carboxylation of phosphoenolpyruvate (PEP) it forms oxaloacetate, a four-carbon dicarboxylic acid source for the tricarboxylic acid cycle. This Flaveria pringlei protein is Phosphoenolpyruvate carboxylase (PPCA1).